The sequence spans 236 residues: SPbeta prophage-derived uncharacterized lipoprotein YokB (236 aa).

The signal sequence occupies residues 1–19 (MNIRFSMLVCVSFIFFTGG). The N-palmitoyl cysteine moiety is linked to residue Cys20. Residue Cys20 is the site of S-diacylglycerol cysteine attachment. Disordered stretches follow at residues 23–59 (SSAN…TPNM) and 204–236 (VKKV…KDNK). A compositionally biased stretch (basic and acidic residues) spans 31-53 (SKNKNESKEESSEEGVKENDNKL).

It is found in the cell membrane. This Bacillus subtilis (strain 168) protein is SPbeta prophage-derived uncharacterized lipoprotein YokB (yokB).